The following is a 252-amino-acid chain: uncharacterized protein (252 aa).

The HTH deoR-type domain maps to 3–58 (AKDRIQAIKQMVANDKKVTVSNLSGIFQVTEETIRRDLEKLEDEGFLTRTYGGAVL). Positions 20–39 (VTVSNLSGIFQVTEETIRRD) form a DNA-binding region, H-T-H motif.

This is an uncharacterized protein from Escherichia coli (strain K12).